The sequence spans 415 residues: Corticotropin-releasing factor receptor 1 (415 aa).

The N-terminal stretch at 1–23 is a signal peptide; the sequence is MGQRPQLRLVKALLLLGLNPVST. The Extracellular portion of the chain corresponds to 24–111; it reads SLQDQQCESL…CQEILNEEKK (88 aa). 3 disulfide bridges follow: C30-C54, C44-C87, and C68-C102. Residues N38, N45, N78, N90, and N98 are each glycosylated (N-linked (GlcNAc...) asparagine). The tract at residues 99 to 108 is important for peptide agonist binding; sequence YSECQEILNE. The chain crosses the membrane as a helical span at residues 112–142; that stretch reads SKVHYHIAVIINYLGHCISLVALLVAFVLFL. Residues 143-149 lie on the Cytoplasmic side of the membrane; sequence RLRSIRC. A helical transmembrane segment spans residues 150–174; sequence LRNIIHWNLISAFILRNATWFVVQL. At 175 to 189 the chain is on the extracellular side; sequence TVSPEVHQSNVAWCR. Cysteines 188 and 258 form a disulfide. Residues 190–218 form a helical membrane-spanning segment; sequence LVTAAYNYFHVTNFFWMFGEGCYLHTAIV. At 219-225 the chain is on the cytoplasmic side; that stretch reads LTYSTDR. Residues 226 to 253 traverse the membrane as a helical segment; sequence LRKWMFVCIGWGVPFPIIVAWAIGKLYY. Topologically, residues 254–269 are extracellular; that stretch reads DNEKCWFGKRPGVYTD. The helical transmembrane segment at 270-295 threads the bilayer; sequence YIYQGPMILVLLINFIFLFNIVRILM. The tract at residues 280–290 is important for antagonist binding; the sequence is LLINFIFLFNI. Residues 296 to 306 lie on the Cytoplasmic side of the membrane; sequence TKLRASTTSET. Phosphoserine; by PKA is present on S301. The chain crosses the membrane as a helical span at residues 307–331; that stretch reads IQYRKAVKATLVLLPLLGITYMLFF. The Extracellular segment spans residues 332-338; the sequence is VNPGEDE. Residues 339 to 368 form a helical membrane-spanning segment; sequence VSRVVFIYFNSFLESFQGFFVSVFYCFLNS. Residues 369 to 415 are Cytoplasmic-facing; it reads EVRSAIRKRWRRWQDKHSIRARVARAMSIPTSPTRVSFHSIKQSTAV.

It belongs to the G-protein coupled receptor 2 family. As to quaternary structure, heterodimer; heterodimerizes with GPER1. Interacts (via N-terminal extracellular domain) with CRH and UCN. Interacts with DLG1; this inhibits endocytosis of CRHR1 after agonist binding. Post-translationally, C-terminal Ser or Thr residues may be phosphorylated. In terms of processing, phosphorylation at Ser-301 by PKA prevents maximal coupling to Gq-protein, and thereby negatively regulates downstream signaling. In terms of tissue distribution, detected in brain cortex (at protein level).

Its subcellular location is the cell membrane. The protein resides in the endosome. In terms of biological role, G-protein coupled receptor for CRH (corticotropin-releasing factor) and UCN (urocortin). Has high affinity for CRH and UCN. Ligand binding causes a conformation change that triggers signaling via guanine nucleotide-binding proteins (G proteins) and down-stream effectors, such as adenylate cyclase. Promotes the activation of adenylate cyclase, leading to increased intracellular cAMP levels. Inhibits the activity of the calcium channel CACNA1H. Required for normal embryonic development of the adrenal gland and for normal hormonal responses to stress. Plays a role in the response to anxiogenic stimuli. In Mus musculus (Mouse), this protein is Corticotropin-releasing factor receptor 1 (Crhr1).